Consider the following 233-residue polypeptide: Guanylate kinase (233 aa).

Positions 3–184 constitute a Guanylate kinase-like domain; that stretch reads GTIFIISAPS…AVEQLRAIVL (182 aa). 10–17 contributes to the ATP binding site; the sequence is APSGSGKS.

This sequence belongs to the guanylate kinase family.

It localises to the cytoplasm. It catalyses the reaction GMP + ATP = GDP + ADP. In terms of biological role, essential for recycling GMP and indirectly, cGMP. The protein is Guanylate kinase of Koribacter versatilis (strain Ellin345).